A 1040-amino-acid polypeptide reads, in one-letter code: MQVLPPGSTGGPSRLFILRPVATTLLMAAMLLAGIIGYRFLPVAALPEVDYPTIQVVTLYPGASPDVMTSAVTAPLERQFGQMSGLKQMSSQSSGGASVVTLQFQLTLPLDVAEQEVQAAINAATNLLPSDLPNPPIYSKVNPADPPIMTLAVTSNAVPMTQVEGMVETRVAQKISQVSGVGLVTLAGGQRPAVRVKLNAQAIAALGLTSETIRTAITGANVNSAKGSLDGPERAVTLSANDQMQSADEYRRLIIAYKNGAPVRLGDVATVEQGAENSWLGAWANKAPAIVMNVQRQPGANIIATADSIRQMLPQLTESLPKSVKVTVLSDRTTNIRASVRDTQFELMLAIALVVMIIYLFLRNIPATIIPGVAVPLSLIGTFAVMVFLDFSINNLTLMALTIATGFVVDDAIVVIENISRYIEKGEKPLAAALKGAGEIGFTIISLTFSLIAVLIPLLFMGDIVGRLFREFAVTLAVAILISAVVSLTLTPMMCARMLSQQSLRKQNRFSRACERLFDRVIASYGRGLAKVLNHPWLTLSVAFATLLLSVMLWIVIPKGFFPVQDNGIIQGTLQAPQSSSYASMAQRQHQVAERILQDPAVQSLTTFVGVDGANPTLNSARLQINLKSLDERDDRVQQVISRLQTAVATIPGVALYLQPTQDLTIDTQVSRTQYQFTLRATTLDALSHWAPKLLNALQSLPQLSEVSSDWQDRGLAAWVNVDRDSASRLGISMADVDNALYNAFGQRLISTIYTQANQYRVVLEHNTANKPGLAALETIRLTGNDGGTIPLSAIASIKQRFTPLSINHLDQFPVTTFSFNVPEGYSLGDAVQAILNTERTLALPADITTQFQGSTLAFQAALGNTVWLIVAAVVAMYIVLGVLYESFIHPITILSTLPTAGVGALLALMIAGSELDIIAIIGIILLIGIVKKNAIMMIDFALAAEREQGMYPRDAIFQACLLRFRPILMTTLAALLGALPLMLSTGVGAELRRPLGIAMVGGLLVSQILTLFTTPVIYLLFDRLSLYVKSRFPRHKEEA.

Helical transmembrane passes span 25–45, 347–367, 369–389, 396–416, 440–460, 472–492, 537–557, 869–889, 890–910, 911–931, 968–988, and 998–1018; these read LLMA…PVAA, LMLA…NIPA, IIPG…MVFL, LTLM…IVVI, IGFT…PLLF, FAVT…TLTP, WLTL…WIVI, LIVA…ESFI, HPIT…LALM, IAGS…IGIV, ILMT…STGV, and IAMV…TPVI.

The protein belongs to the resistance-nodulation-cell division (RND) (TC 2.A.6) family. MdtB subfamily. Part of a tripartite efflux system composed of MdtA, MdtB and MdtC. MdtB forms a heteromultimer with MdtC.

The protein localises to the cell inner membrane. In Salmonella arizonae (strain ATCC BAA-731 / CDC346-86 / RSK2980), this protein is Multidrug resistance protein MdtB.